The sequence spans 477 residues: Cysteine--tRNA ligase (477 aa).

C28 lines the Zn(2+) pocket. A 'HIGH' region motif is present at residues P30 to H40. Zn(2+) is bound by residues C208, H233, and E237. The short motif at K265–S269 is the 'KMSKS' region element. Residue K268 coordinates ATP.

Belongs to the class-I aminoacyl-tRNA synthetase family. It depends on Zn(2+) as a cofactor.

It localises to the cytoplasm. The enzyme catalyses tRNA(Cys) + L-cysteine + ATP = L-cysteinyl-tRNA(Cys) + AMP + diphosphate. This is Cysteine--tRNA ligase from Pyrococcus furiosus (strain ATCC 43587 / DSM 3638 / JCM 8422 / Vc1).